The chain runs to 304 residues: Splicing factor U2af small subunit B (304 aa).

The C3H1-type 1 zinc-finger motif lies at 12 to 40 (EKDRVNCPFYFKIGACRHGDRCSRLHNRP). The RRM domain occupies 44 to 146 (PTIVLANMYQ…RPIIVEYSPV (103 aa)). The segment at 148–175 (DFREATCRQFEENSCNRGGYCNFMHVKQ) adopts a C3H1-type 2 zinc-finger fold. Residues 184–207 (LYGGRSRRSHGRSRSPSPRHRRGN) are compositionally biased toward basic residues. Positions 184 to 304 (LYGGRSRRSH…QWNREREEKP (121 aa)) are disordered. Residues 208–220 (RDRDDFRRERDGY) are compositionally biased toward basic and acidic residues. Gly residues predominate over residues 221-258 (RGGGDGYRGGGGGGGGDGYRGGDSYRGGGGGGRRGGGS). Over residues 268-280 (RRRHGSPPRRARS) the composition is skewed to basic residues. Basic and acidic residues predominate over residues 281–304 (PVRESSEERRAKIEQWNREREEKP).

It belongs to the splicing factor SR family.

It is found in the nucleus. In terms of biological role, necessary for the splicing of pre-mRNA. This Oryza sativa subsp. japonica (Rice) protein is Splicing factor U2af small subunit B (U2AF35B).